We begin with the raw amino-acid sequence, 92 residues long: N(2)-fixation sustaining protein CowN (92 aa).

The protein belongs to the CowN family.

Functionally, is required to sustain N(2)-dependent growth in the presence of low levels of carbon monoxide (CO). Probably acts by protecting the N(2) fixation ability of the nitrogenase complex, which is inactivated in the presence of CO. The polypeptide is N(2)-fixation sustaining protein CowN (Rhodopseudomonas palustris (strain ATCC BAA-98 / CGA009)).